A 408-amino-acid chain; its full sequence is D-galactonate dehydratase family member OG2516_05608 (408 aa).

D215 is a binding site for Mg(2+). Residue H217 participates in D-arabinonate binding. 2 residues coordinate Mg(2+): E241 and E267. Residues E267, R288, H317, and E344 each contribute to the D-arabinonate site.

Belongs to the mandelate racemase/muconate lactonizing enzyme family. GalD subfamily.

In terms of biological role, has no detectable activity with D-mannonate and with a panel of 70 other acid sugars (in vitro), in spite of the conservation of the residues that are expected to be important for catalytic activity and cofactor binding. May have evolved a divergent function. This is D-galactonate dehydratase family member OG2516_05608 from Oceanicola granulosus (strain ATCC BAA-861 / DSM 15982 / KCTC 12143 / HTCC2516).